Consider the following 372-residue polypeptide: tRNA pseudouridine synthase D (372 aa).

Aspartate 85 acts as the Nucleophile in catalysis. Positions glycine 160–glycine 330 constitute a TRUD domain.

The protein belongs to the pseudouridine synthase TruD family.

The catalysed reaction is uridine(13) in tRNA = pseudouridine(13) in tRNA. Its function is as follows. Responsible for synthesis of pseudouridine from uracil-13 in transfer RNAs. This chain is tRNA pseudouridine synthase D, found in Campylobacter jejuni subsp. jejuni serotype O:6 (strain 81116 / NCTC 11828).